A 408-amino-acid chain; its full sequence is Multidrug resistance protein MdtG (408 aa).

Helical transmembrane passes span L16 to F36, I58 to A78, L92 to I112, A115 to V135, T146 to A166, P173 to I193, L224 to L244, V256 to P276, I290 to T310, F319 to N339, and A378 to L398.

The protein belongs to the major facilitator superfamily. DHA1 family. MdtG (TC 2.A.1.2.20) subfamily.

It is found in the cell inner membrane. In terms of biological role, confers resistance to fosfomycin and deoxycholate. The sequence is that of Multidrug resistance protein MdtG from Escherichia coli O81 (strain ED1a).